The sequence spans 348 residues: 3-keto-steroid reductase (348 aa).

Leu18, Thr41, and Arg47 together coordinate NADP(+). Residues Ser180 and Tyr203 each act as proton donor in the active site. Residues Tyr203, Lys207, and Ser238 each coordinate NADP(+). Catalysis depends on Lys207, which acts as the Lowers pKa of active site Tyr.

It belongs to the short-chain dehydrogenases/reductases (SDR) family. ERG27 subfamily.

It catalyses the reaction a 3beta-hydroxysteroid + NADP(+) = a 3-oxosteroid + NADPH + H(+). It functions in the pathway steroid biosynthesis; zymosterol biosynthesis; zymosterol from lanosterol: step 5/6. In terms of biological role, responsible for the reduction of the keto group on the C-3 of sterols. The polypeptide is 3-keto-steroid reductase (ERG27) (Candida glabrata (strain ATCC 2001 / BCRC 20586 / JCM 3761 / NBRC 0622 / NRRL Y-65 / CBS 138) (Yeast)).